The primary structure comprises 301 residues: Pyridoxal 5'-phosphate synthase subunit PdxS (301 aa).

Residue D31 coordinates D-ribose 5-phosphate. The active-site Schiff-base intermediate with D-ribose 5-phosphate is the K88. G160 is a D-ribose 5-phosphate binding site. Position 172 (K172) interacts with D-glyceraldehyde 3-phosphate. D-ribose 5-phosphate contacts are provided by residues G221 and 242–243; that span reads GS.

Belongs to the PdxS/SNZ family. In the presence of PdxT, forms a dodecamer of heterodimers.

The enzyme catalyses aldehydo-D-ribose 5-phosphate + D-glyceraldehyde 3-phosphate + L-glutamine = pyridoxal 5'-phosphate + L-glutamate + phosphate + 3 H2O + H(+). The protein operates within cofactor biosynthesis; pyridoxal 5'-phosphate biosynthesis. Its function is as follows. Catalyzes the formation of pyridoxal 5'-phosphate from ribose 5-phosphate (RBP), glyceraldehyde 3-phosphate (G3P) and ammonia. The ammonia is provided by the PdxT subunit. Can also use ribulose 5-phosphate and dihydroxyacetone phosphate as substrates, resulting from enzyme-catalyzed isomerization of RBP and G3P, respectively. In Methanosarcina acetivorans (strain ATCC 35395 / DSM 2834 / JCM 12185 / C2A), this protein is Pyridoxal 5'-phosphate synthase subunit PdxS.